A 434-amino-acid chain; its full sequence is 26S proteasome regulatory subunit 6A (434 aa).

Position 2 is an N-acetylalanine (Ala2). Tyr180 carries the phosphotyrosine modification. 222 to 229 is a binding site for ATP; it reads GPPGTGKT.

Belongs to the AAA ATPase family. N-acetylated by NAT1.

It localises to the cytoplasm. Its subcellular location is the nucleus. The 26S proteasome is involved in the ATP-dependent degradation of ubiquitinated proteins. The regulatory (or ATPase) complex confers ATP dependency and substrate specificity to the 26S complex. The polypeptide is 26S proteasome regulatory subunit 6A (RPT5) (Saccharomyces cerevisiae (strain ATCC 204508 / S288c) (Baker's yeast)).